We begin with the raw amino-acid sequence, 347 residues long: NADH-ubiquinone oxidoreductase chain 2 (347 aa).

The next 11 membrane-spanning stretches (helical) occupy residues 3–23, 25–45, 59–79, 96–116, 122–142, 149–169, 178–198, 201–221, 237–257, 274–294, and 325–345; these read PPIFFLIMSTVISGTLIVMTS, HWMLTWIGFEMNMLAIIPILM, YFLTQATASMLLMMGIIINLL, ILMTTALAMKLGLAPFHFWVP, IPLSSGMILLTWQKIAPLSVL, INPNLLLPMATLSVLIGGWGG, ILAYSSIAHMGWMTAILLYNP, MILNLTIYIIMTLTTFMLFML, MPLITSLITMLMLSLGGLPPL, EMIIMPTFLAITALLNLYFYM, and FLPPLIITSTMLLPLTPMISI.

The protein belongs to the complex I subunit 2 family. As to quaternary structure, core subunit of respiratory chain NADH dehydrogenase (Complex I) which is composed of 45 different subunits. Interacts with TMEM242.

The protein resides in the mitochondrion inner membrane. It catalyses the reaction a ubiquinone + NADH + 5 H(+)(in) = a ubiquinol + NAD(+) + 4 H(+)(out). In terms of biological role, core subunit of the mitochondrial membrane respiratory chain NADH dehydrogenase (Complex I) which catalyzes electron transfer from NADH through the respiratory chain, using ubiquinone as an electron acceptor. Essential for the catalytic activity and assembly of complex I. In Genetta servalina (Servaline genet), this protein is NADH-ubiquinone oxidoreductase chain 2.